The following is a 410-amino-acid chain: Mating-type locus allele B3 protein (410 aa).

Residues Met1–Cys110 are variable domain between B alleles. The homeobox; TALE-type DNA-binding region spans Gly107 to His184. Residues Arg111–Val410 are highly conserved between B alleles. Disordered stretches follow at residues Ala203–Asp224 and Thr278–Leu335. Polar residues predominate over residues Leu205–Glu219. A Nuclear localization signal motif is present at residues Lys276–Arg308. The segment covering Ala291–Ser307 has biased composition (basic residues). Polar residues predominate over residues Pro312 to Leu335. A not essential for B3 function region spans residues Pro333 to Val410.

Belongs to the TALE/M-ATYP homeobox family.

The protein resides in the nucleus. In terms of biological role, the B locus has at least 25 alleles, and any combination of two different B alleles yields a multimeric regulatory protein, that activates genes responsible for the pathogenicity and for the sexual development of the fungus within the corn plant. This is Mating-type locus allele B3 protein from Mycosarcoma maydis (Corn smut fungus).